The sequence spans 318 residues: Cytochrome c biogenesis protein CcsA (318 aa).

8 helical membrane passes run 17 to 37, 45 to 65, 75 to 95, 104 to 124, 149 to 169, 224 to 244, 258 to 275, and 287 to 307; these read VLAL…ISFW, SAVV…QLVL, ISNL…AQLL, IVSA…SFAL, VIMC…AVLF, TITV…VWAN, TWAL…HTRF, and VAVA…LLGI.

The protein belongs to the CcmF/CycK/Ccl1/NrfE/CcsA family. May interact with ccs1.

It localises to the cellular thylakoid membrane. In terms of biological role, required during biogenesis of c-type cytochromes (cytochrome c6 and cytochrome f) at the step of heme attachment. In Prochlorococcus marinus (strain MIT 9313), this protein is Cytochrome c biogenesis protein CcsA.